Reading from the N-terminus, the 390-residue chain is 1-deoxy-D-xylulose 5-phosphate reductoisomerase (390 aa).

Residues T10, G11, S12, I13, G36, N38, and N124 each contribute to the NADPH site. K125 serves as a coordination point for 1-deoxy-D-xylulose 5-phosphate. Residue E126 coordinates NADPH. D150 provides a ligand contact to Mn(2+). 1-deoxy-D-xylulose 5-phosphate contacts are provided by S151, E152, S176, and H199. Position 152 (E152) interacts with Mn(2+). Residue G205 participates in NADPH binding. 1-deoxy-D-xylulose 5-phosphate is bound by residues S212, N217, K218, and E221. Residue E221 participates in Mn(2+) binding.

It belongs to the DXR family. The cofactor is Mg(2+). It depends on Mn(2+) as a cofactor.

The enzyme catalyses 2-C-methyl-D-erythritol 4-phosphate + NADP(+) = 1-deoxy-D-xylulose 5-phosphate + NADPH + H(+). Its pathway is isoprenoid biosynthesis; isopentenyl diphosphate biosynthesis via DXP pathway; isopentenyl diphosphate from 1-deoxy-D-xylulose 5-phosphate: step 1/6. In terms of biological role, catalyzes the NADPH-dependent rearrangement and reduction of 1-deoxy-D-xylulose-5-phosphate (DXP) to 2-C-methyl-D-erythritol 4-phosphate (MEP). This Microcystis aeruginosa (strain NIES-843 / IAM M-2473) protein is 1-deoxy-D-xylulose 5-phosphate reductoisomerase.